The primary structure comprises 427 residues: Tol-Pal system protein TolB (427 aa).

An N-terminal signal peptide occupies residues 1 to 23 (MKLLKRLVSVFAIVLAVGSNAFA).

It belongs to the TolB family. The Tol-Pal system is composed of five core proteins: the inner membrane proteins TolA, TolQ and TolR, the periplasmic protein TolB and the outer membrane protein Pal. They form a network linking the inner and outer membranes and the peptidoglycan layer.

The protein localises to the periplasm. Part of the Tol-Pal system, which plays a role in outer membrane invagination during cell division and is important for maintaining outer membrane integrity. This is Tol-Pal system protein TolB from Haemophilus influenzae (strain PittEE).